The sequence spans 543 residues: ATP synthase subunit alpha (543 aa).

174 to 181 (GDRQTGKT) contributes to the ATP binding site. Residues 521 to 543 (VEKKPDVDKAAPVDQEKIVAGEK) are disordered.

Belongs to the ATPase alpha/beta chains family. F-type ATPases have 2 components, CF(1) - the catalytic core - and CF(0) - the membrane proton channel. CF(1) has five subunits: alpha(3), beta(3), gamma(1), delta(1), epsilon(1). CF(0) has three main subunits: a(1), b(2) and c(9-12). The alpha and beta chains form an alternating ring which encloses part of the gamma chain. CF(1) is attached to CF(0) by a central stalk formed by the gamma and epsilon chains, while a peripheral stalk is formed by the delta and b chains.

The protein localises to the cell membrane. The catalysed reaction is ATP + H2O + 4 H(+)(in) = ADP + phosphate + 5 H(+)(out). Functionally, produces ATP from ADP in the presence of a proton gradient across the membrane. The alpha chain is a regulatory subunit. This Bifidobacterium longum (strain DJO10A) protein is ATP synthase subunit alpha.